Reading from the N-terminus, the 204-residue chain is Large ribosomal subunit protein bL25 (204 aa).

The protein belongs to the bacterial ribosomal protein bL25 family. CTC subfamily. As to quaternary structure, part of the 50S ribosomal subunit; part of the 5S rRNA/L5/L18/L25 subcomplex. Contacts the 5S rRNA. Binds to the 5S rRNA independently of L5 and L18.

This is one of the proteins that binds to the 5S RNA in the ribosome where it forms part of the central protuberance. The polypeptide is Large ribosomal subunit protein bL25 (Rhizobium etli (strain ATCC 51251 / DSM 11541 / JCM 21823 / NBRC 15573 / CFN 42)).